Here is a 277-residue protein sequence, read N- to C-terminus: 4-deoxy-L-threo-5-hexosulose-uronate ketol-isomerase (277 aa).

Residues His195, His197, Glu202, and His244 each contribute to the Zn(2+) site.

Belongs to the KduI family. Zn(2+) serves as cofactor.

The catalysed reaction is 5-dehydro-4-deoxy-D-glucuronate = 3-deoxy-D-glycero-2,5-hexodiulosonate. It functions in the pathway glycan metabolism; pectin degradation; 2-dehydro-3-deoxy-D-gluconate from pectin: step 4/5. Catalyzes the isomerization of 5-dehydro-4-deoxy-D-glucuronate to 3-deoxy-D-glycero-2,5-hexodiulosonate. The polypeptide is 4-deoxy-L-threo-5-hexosulose-uronate ketol-isomerase (Oceanobacillus iheyensis (strain DSM 14371 / CIP 107618 / JCM 11309 / KCTC 3954 / HTE831)).